A 330-amino-acid chain; its full sequence is Peroxidase 42 (330 aa).

Residues 1–23 form the signal peptide; that stretch reads MGGKGVMMVAILCLWALSATSEA. 4 disulfide bridges follow: Cys40-Cys119, Cys73-Cys78, Cys125-Cys323, and Cys204-Cys231. His71 acts as the Proton acceptor in catalysis. Ca(2+)-binding residues include Asp72, Val75, Asp79, and Ser81. Pro167 is a binding site for substrate. Asn170 carries N-linked (GlcNAc...) asparagine glycosylation. Residue His197 participates in heme b binding. Ca(2+) is bound at residue Ser198. Positions 247, 250, and 255 each coordinate Ca(2+).

Belongs to the peroxidase family. Classical plant (class III) peroxidase subfamily. The cofactor is heme b. Ca(2+) is required as a cofactor. Constitutively expressed in the whole plant, with the highest expression in roots.

It is found in the secreted. The catalysed reaction is 2 a phenolic donor + H2O2 = 2 a phenolic radical donor + 2 H2O. Functionally, removal of H(2)O(2), oxidation of toxic reductants, biosynthesis and degradation of lignin, suberization, auxin catabolism, response to environmental stresses such as wounding, pathogen attack and oxidative stress. These functions might be dependent on each isozyme/isoform in each plant tissue. Its function is as follows. Might function as heat shock-like defense protein. This is Peroxidase 42 (PER42) from Arabidopsis thaliana (Mouse-ear cress).